The sequence spans 471 residues: Neuraminidase (471 aa).

At 1-6 the chain is on the intravirion side; it reads MNPNQK. Residues 7 to 27 traverse the membrane as a helical segment; that stretch reads LFALSGVAIALSVLNLLIGIS. Residues 11–33 form an involved in apical transport and lipid raft association region; it reads SGVAIALSVLNLLIGISNVGLNV. The Virion surface segment spans residues 28-471; that stretch reads NVGLNVSLHL…PDGAQIQYFS (444 aa). Residues Asn-32, Asn-47, Asn-56, Asn-57, Asn-67, Asn-68, and Asn-87 are each glycosylated (N-linked (GlcNAc...) asparagine; by host). The tract at residues 36-87 is hypervariable stalk region; that stretch reads HLKGEGVKQENNLTCTTITQNNTTVVENTYVNNTTIINKGTNLKAPNYLLLN. Residues 90–471 are head of neuraminidase; it reads LCSVEGWVVI…PDGAQIQYFS (382 aa). Disulfide bonds link Cys-91–Cys-419, Cys-123–Cys-128, Cys-183–Cys-230, Cys-232–Cys-237, Cys-278–Cys-291, Cys-280–Cys-289, Cys-318–Cys-336, and Cys-423–Cys-450. Arg-117 provides a ligand contact to substrate. Asn-145 is a glycosylation site (N-linked (GlcNAc...) asparagine; by host). The active-site Proton donor/acceptor is the Asp-150. Residue Arg-151 participates in substrate binding. 2 N-linked (GlcNAc...) asparagine; by host glycosylation sites follow: Asn-200 and Asn-234. 276 to 277 contributes to the substrate binding site; the sequence is EE. A substrate-binding site is contributed by Arg-292. 3 residues coordinate Ca(2+): Asp-293, Gly-297, and Asp-324. Residue Arg-371 coordinates substrate. Residue Asn-401 is glycosylated (N-linked (GlcNAc...) asparagine; by host). Catalysis depends on Tyr-405, which acts as the Nucleophile.

This sequence belongs to the glycosyl hydrolase 34 family. Homotetramer. Ca(2+) serves as cofactor. Post-translationally, N-glycosylated.

It localises to the virion membrane. It is found in the host apical cell membrane. The catalysed reaction is Hydrolysis of alpha-(2-&gt;3)-, alpha-(2-&gt;6)-, alpha-(2-&gt;8)- glycosidic linkages of terminal sialic acid residues in oligosaccharides, glycoproteins, glycolipids, colominic acid and synthetic substrates.. Its activity is regulated as follows. Inhibited by the neuraminidase inhibitors zanamivir (Relenza) and oseltamivir (Tamiflu). These drugs interfere with the release of progeny virus from infected cells and are effective against all influenza strains. Resistance to neuraminidase inhibitors is quite rare. In terms of biological role, catalyzes the removal of terminal sialic acid residues from viral and cellular glycoconjugates. Cleaves off the terminal sialic acids on the glycosylated HA during virus budding to facilitate virus release. Additionally helps virus spread through the circulation by further removing sialic acids from the cell surface. These cleavages prevent self-aggregation and ensure the efficient spread of the progeny virus from cell to cell. Otherwise, infection would be limited to one round of replication. Described as a receptor-destroying enzyme because it cleaves a terminal sialic acid from the cellular receptors. May facilitate viral invasion of the upper airways by cleaving the sialic acid moieties on the mucin of the airway epithelial cells. Likely to plays a role in the budding process through its association with lipid rafts during intracellular transport. May additionally display a raft-association independent effect on budding. Plays a role in the determination of host range restriction on replication and virulence. Sialidase activity in late endosome/lysosome traffic seems to enhance virus replication. This is Neuraminidase from Aves (Horse).